The sequence spans 360 residues: Phospho-N-acetylmuramoyl-pentapeptide-transferase (360 aa).

10 helical membrane-spanning segments follow: residues 26-46 (AILGVMTALGLSLLLGPWVIN), 70-90 (GTPTMGGTLILFAIVFATLLW), 97-117 (YVLAVLFVTLSFGLVGWVDDY), 134-154 (YFWQSLAGFTVAYGLYVTAQI), 167-187 (GVALELGVFYIILTYFMVVGF), 199-219 (GLAIMPTVMVGSALGIIAYLV), 236-256 (AGELVVYCAALAGAGLGFLWF), 263-283 (VFMGDVGALALGAALGIIAVI), 288-308 (IVFIIMSGIFVMETVSVILQV), and 338-358 (VIVRFWIITVMLVLFGLATLK).

Belongs to the glycosyltransferase 4 family. MraY subfamily. Requires Mg(2+) as cofactor.

Its subcellular location is the cell inner membrane. It catalyses the reaction UDP-N-acetyl-alpha-D-muramoyl-L-alanyl-gamma-D-glutamyl-meso-2,6-diaminopimeloyl-D-alanyl-D-alanine + di-trans,octa-cis-undecaprenyl phosphate = di-trans,octa-cis-undecaprenyl diphospho-N-acetyl-alpha-D-muramoyl-L-alanyl-D-glutamyl-meso-2,6-diaminopimeloyl-D-alanyl-D-alanine + UMP. It participates in cell wall biogenesis; peptidoglycan biosynthesis. Functionally, catalyzes the initial step of the lipid cycle reactions in the biosynthesis of the cell wall peptidoglycan: transfers peptidoglycan precursor phospho-MurNAc-pentapeptide from UDP-MurNAc-pentapeptide onto the lipid carrier undecaprenyl phosphate, yielding undecaprenyl-pyrophosphoryl-MurNAc-pentapeptide, known as lipid I. In Saccharophagus degradans (strain 2-40 / ATCC 43961 / DSM 17024), this protein is Phospho-N-acetylmuramoyl-pentapeptide-transferase.